A 563-amino-acid polypeptide reads, in one-letter code: Eukaryotic translation initiation factor 3 subunit D-1 (563 aa).

Positions 98-167 (VQKPPHQRGR…GPPPKMRESS (70 aa)) are disordered. The span at 100 to 121 (KPPHQRGRFRNMRNSRSGRGRN) shows a compositional bias: basic residues. Thr-128 is subject to Phosphothreonine. The segment at 291 to 305 (EFDLLTVNESSVEPP) is RNA gate.

It belongs to the eIF-3 subunit D family. In terms of assembly, component of the eukaryotic translation initiation factor 3 (eIF-3) complex. The eIF-3 complex interacts with pix.

It localises to the cytoplasm. In terms of biological role, mRNA cap-binding component of the eukaryotic translation initiation factor 3 (eIF-3) complex, which is involved in protein synthesis of a specialized repertoire of mRNAs and, together with other initiation factors, stimulates binding of mRNA and methionyl-tRNAi to the 40S ribosome. The eIF-3 complex specifically targets and initiates translation of a subset of mRNAs involved in cell proliferation. In the eIF-3 complex, eif3d specifically recognizes and binds the 7-methylguanosine cap of a subset of mRNAs. This Drosophila grimshawi (Hawaiian fruit fly) protein is Eukaryotic translation initiation factor 3 subunit D-1.